A 444-amino-acid chain; its full sequence is MPSTRRQQEGGGADAETHTVYGTNLITNRNSQEDENVVEEAELKYGASHVIHLFVPVSLCMALVVFTMNTITFYSQNNGRHLLYTPFVRETDSIVEKGLMSLGNALVMLCVVVLMTVLLIVFYKYKFYKLIHGWLIVSSFLLLFLFTTIYVQEVLKSFDVSPSALLVLFGLGNYGVLGMMCIHWKGPLRLQQFYLITMSALMALVFIKYLPEWTVWFVLFVISVWDLVAVLTPKGPLRYLVETAQERNEPIFPALIYSSGVIYPYVLVTAVENTTDPREPTSSDSNTSTAFPGEASCSSETPKRPKVKRIPQKVQIESNTTASTTQNSGVRVERELAAERPTVQDANFHRHEEEERGVKLGLGDFIFYSVLLGKASSYFDWNTTIACYVAILIGLCFTLVLLAVFKRALPALPISIFSGLIFYFCTRWIITPFVTQVSQKCLLY.

Residues 1 to 45 (MPSTRRQQEGGGADAETHTVYGTNLITNRNSQEDENVVEEAELKY) lie on the Cytoplasmic side of the membrane. Residues 46-66 (GASHVIHLFVPVSLCMALVVF) form a helical membrane-spanning segment. Over 67 to 101 (TMNTITFYSQNNGRHLLYTPFVRETDSIVEKGLMS) the chain is Lumenal. Residues 102-122 (LGNALVMLCVVVLMTVLLIVF) traverse the membrane as a helical segment. Residues 123-130 (YKYKFYKL) lie on the Cytoplasmic side of the membrane. The chain crosses the membrane as a helical span at residues 131-151 (IHGWLIVSSFLLLFLFTTIYV). At 152 to 163 (QEVLKSFDVSPS) the chain is on the lumenal side. A helical transmembrane segment spans residues 164 to 184 (ALLVLFGLGNYGVLGMMCIHW). The Cytoplasmic segment spans residues 185 to 189 (KGPLR). A helical transmembrane segment spans residues 190–210 (LQQFYLITMSALMALVFIKYL). At 211–212 (PE) the chain is on the lumenal side. The chain crosses the membrane as a helical span at residues 213 to 233 (WTVWFVLFVISVWDLVAVLTP). Asp-226 is an active-site residue. The Cytoplasmic portion of the chain corresponds to 234–359 (KGPLRYLVET…RHEEEERGVK (126 aa)). A disordered region spans residues 275–331 (TDPREPTSSDSNTSTAFPGEASCSSETPKRPKVKRIPQKVQIESNTTASTTQNSGVR). 2 stretches are compositionally biased toward polar residues: residues 282–300 (SSDS…CSSE) and 315–329 (QIES…QNSG). Residues 360–380 (LGLGDFIFYSVLLGKASSYFD) traverse the membrane as a helical segment. Residue Asp-364 is part of the active site. Residues 381–384 (WNTT) are Lumenal-facing. The helical transmembrane segment at 385-405 (IACYVAILIGLCFTLVLLAVF) threads the bilayer. Topologically, residues 406-413 (KRALPALP) are cytoplasmic. The PAL motif lies at 410 to 412 (PAL). An intramembrane region (helical) is located at residues 414–434 (ISIFSGLIFYFCTRWIITPFV). At 435–444 (TQVSQKCLLY) the chain is on the cytoplasmic side.

The protein belongs to the peptidase A22A family. Homodimer. Component of the gamma-secretase complex, a complex probably composed of the presenilin homodimer (sel-12, hop-1 or spe-4), nicastrin (aph-2), aph-1 and pen-2. Interacts with sel-10. In terms of tissue distribution, expressed in most neurons.

Its subcellular location is the endoplasmic reticulum membrane. The protein resides in the golgi apparatus membrane. Its function is as follows. Probable catalytic subunit of the gamma-secretase complex, an endoprotease complex that catalyzes the intramembrane cleavage of integral membrane proteins such as Notch receptors (lin-12 or glp-1). Provides the major presenilin function compared to hop-1 and spe-4. Required cell-autonomously for correct neurite connectivity of the AIY cholinergic interneurons and their correct functioning in thermotaxis. Required for mesodermal patterning of muscle function. Promotes basement membrane gap formation during tissue remodeling. In Caenorhabditis elegans, this protein is Presenilin sel-12.